We begin with the raw amino-acid sequence, 603 residues long: 65-kDa microtubule-associated protein 7 (603 aa).

3 coiled-coil regions span residues 48–79 (KECL…EAEI), 131–186 (DIKA…EKSD), and 468–502 (RLVS…LLIK). Positions 501–559 (IKRRESIYGSKPSPRRSNSVRKTNGYNGDASVPPTPRRNSAGATNNDIMTTPRSYSSHR) are disordered. Residue Ser513 is modified to Phosphoserine. Polar residues-rich tracts occupy residues 515 to 526 (RRSNSVRKTNGY) and 537 to 559 (RRNS…SSHR). The residue at position 599 (Ser599) is a Phosphoserine.

Belongs to the MAP65/ASE1 family. As to quaternary structure, forms dimer. Binds to microtubules (MT).

The protein localises to the nucleus. It is found in the cytoplasm. It localises to the cytoskeleton. Its subcellular location is the spindle pole. The sequence is that of 65-kDa microtubule-associated protein 7 (MAP65-7) from Arabidopsis thaliana (Mouse-ear cress).